The following is a 136-amino-acid chain: Histone H3.3C (136 aa).

The disordered stretch occupies residues 1–44 (MARTKQTARKSTGGKAPRKQLVTKAARKSAPSTGGMKKPHRYRP). Arg3 carries the post-translational modification Asymmetric dimethylarginine; by PRMT6; alternate. Arg3 is modified (citrulline; alternate). Thr4 bears the Phosphothreonine; by HASPIN mark. Allysine; alternate is present on Lys5. Lys5 is modified (N6,N6,N6-trimethyllysine; alternate). Residue Lys5 is modified to N6,N6-dimethyllysine; alternate. Residue Lys5 is modified to N6-(2-hydroxyisobutyryl)lysine; alternate. Lys5 carries the N6-(beta-hydroxybutyryl)lysine; alternate modification. Lys5 is modified (N6-acetyllysine; alternate). N6-methyllysine; alternate is present on Lys5. Residue Gln6 is modified to 5-glutamyl dopamine; alternate. Gln6 bears the 5-glutamyl serotonin; alternate mark. At Thr7 the chain carries Phosphothreonine; by PKC. A Symmetric dimethylarginine modification is found at Arg9. Lys10 bears the N6,N6,N6-trimethyllysine; alternate mark. N6,N6-dimethyllysine; alternate is present on Lys10. The residue at position 10 (Lys10) is an N6-(2-hydroxyisobutyryl)lysine; alternate. Position 10 is an N6-(beta-hydroxybutyryl)lysine; alternate (Lys10). Residue Lys10 is modified to N6-acetyllysine; alternate. At Lys10 the chain carries N6-methyllysine; alternate. Lys10 is subject to N6-lactoyllysine; alternate. The residue at position 11 (Ser11) is an ADP-ribosylserine; alternate. At Ser11 the chain carries Phosphoserine; alternate; by AURKB, AURKC, RPS6KA3, RPS6KA4 and RPS6KA5. Thr12 is subject to Phosphothreonine; by PKC. Position 15 is an N6-(2-hydroxyisobutyryl)lysine; alternate (Lys15). The residue at position 15 (Lys15) is an N6-(beta-hydroxybutyryl)lysine; alternate. Lys15 carries the post-translational modification N6-acetyllysine; alternate. An N6-lactoyllysine; alternate modification is found at Lys15. An N6-glutaryllysine; alternate modification is found at Lys15. Residue Lys15 is modified to N6-succinyllysine; alternate. The residue at position 18 (Arg18) is an Asymmetric dimethylarginine. Residues Lys19 and Lys24 each carry the N6-(2-hydroxyisobutyryl)lysine; alternate modification. Residues Lys19 and Lys24 each carry the N6-(beta-hydroxybutyryl)lysine; alternate modification. Residues Lys19 and Lys24 each carry the N6-acetyllysine; alternate modification. 2 positions are modified to N6-methyllysine; alternate: Lys19 and Lys24. Residues Lys19 and Lys24 each carry the N6-lactoyllysine; alternate modification. N6-glutaryllysine; alternate occurs at positions 19 and 24. Residues Lys19 and Lys24 each carry the N6-butyryllysine; alternate modification. Residue Arg27 is modified to Citrulline. Position 28 is an N6,N6,N6-trimethyllysine; alternate (Lys28). Lys28 carries the post-translational modification N6,N6-dimethyllysine; alternate. The residue at position 28 (Lys28) is an N6-(2-hydroxyisobutyryl)lysine; alternate. Lys28 carries the N6-acetyllysine; alternate modification. Position 28 is an N6-methyllysine; alternate (Lys28). Lys28 carries the N6-lactoyllysine; alternate modification. Position 28 is an N6-glutaryllysine; alternate (Lys28). Ser29 is modified (ADP-ribosylserine; alternate). A Phosphoserine; alternate; by AURKB, AURKC and RPS6KA5 modification is found at Ser29. Residue Ser32 is modified to Phosphoserine. At Lys37 the chain carries N6,N6,N6-trimethyllysine; alternate. Lys37 is subject to N6,N6-dimethyllysine; alternate. The residue at position 37 (Lys37) is an N6-(2-hydroxyisobutyryl)lysine; alternate. Residue Lys37 is modified to N6-acetyllysine; alternate. Residue Lys37 is modified to N6-methyllysine; alternate. Position 38 is an N6-methyllysine (Lys38). Tyr42 bears the Phosphotyrosine mark. At Lys57 the chain carries N6,N6,N6-trimethyllysine; alternate. Lys57 bears the N6-(2-hydroxyisobutyryl)lysine; alternate mark. Position 57 is an N6-(beta-hydroxybutyryl)lysine; alternate (Lys57). At Lys57 the chain carries N6-acetyllysine; alternate. N6-methyllysine; alternate is present on Lys57. An N6-lactoyllysine; alternate modification is found at Lys57. The residue at position 57 (Lys57) is an N6-glutaryllysine; alternate. Lys57 carries the N6-succinyllysine; alternate modification. Ser58 is subject to Phosphoserine. N6-(2-hydroxyisobutyryl)lysine; alternate occurs at positions 65 and 80. An N6-methyllysine; alternate mark is found at Lys65 and Lys80. At Lys80 the chain carries N6,N6,N6-trimethyllysine; alternate. Position 80 is an N6,N6-dimethyllysine; alternate (Lys80). At Lys80 the chain carries N6-acetyllysine; alternate. N6-lactoyllysine; alternate is present on Lys80. The residue at position 80 (Lys80) is an N6-glutaryllysine; alternate. Position 80 is an N6-succinyllysine; alternate (Lys80). Thr81 is modified (phosphothreonine). Ser87 is modified (phosphoserine). Thr108 bears the Phosphothreonine mark. Position 116 is an N6-acetyllysine; alternate (Lys116). Lys116 carries the N6-glutaryllysine; alternate modification.

It belongs to the histone H3 family. The nucleosome is a histone octamer containing two molecules each of H2A, H2B, H3 and H4 assembled in one H3-H4 heterotetramer and two H2A-H2B heterodimers. The octamer wraps approximately 147 bp of DNA. Acetylation is generally linked to gene activation. Acetylation on Lys-19 (H3K18ac) favors methylation at Arg-18 (H3R17me). In terms of processing, citrullination at Arg-18 by PADI4 impairs methylation and represses transcription. Post-translationally, asymmetric dimethylation at Arg-18 (H3R17me2a) by CARM1 is linked to gene activation. Asymmetric dimethylation at Arg-3 (H3R2me2a) by PRMT6 is linked to gene repression and is mutually exclusive with H3 Lys-5 methylation (H3K4me2 and H3K4me3). H3R2me2a is present at the 3' of genes regardless of their transcription state and is enriched on inactive promoters, while it is absent on active promoters. Methylation at Lys-5 (H3K4me) and Lys-80 (H3K79me) are linked to gene activation. Methylation at Lys-5 (H3K4me) facilitates subsequent acetylation of H3 and H4. Methylation at Lys-80 (H3K79me) is associated with DNA double-strand break (DSB) responses and is a specific target for TP53BP1. Methylation at Lys-10 (H3K9me) and Lys-28 (H3K27me) are linked to gene repression. Methylation at Lys-10 (H3K9me) is a specific target for HP1 proteins (CBX1, CBX3 and CBX5) and prevents subsequent phosphorylation at Ser-11 (H3S10ph) and acetylation of H3 and H4. Methylation at Lys-5 (H3K4me) and Lys-80 (H3K79me) require preliminary monoubiquitination of H2B at 'Lys-120'. Methylation at Lys-10 (H3K9me) and Lys-28 (H3K27me) are enriched in inactive X chromosome chromatin. Monomethylation at Lys-57 (H3K56me1) by EHMT2/G9A in G1 phase promotes interaction with PCNA and is required for DNA replication. In terms of processing, phosphorylated at Thr-4 (H3T3ph) by HASPIN during prophase and dephosphorylated during anaphase. Phosphorylation at Ser-11 (H3S10ph) by AURKB is crucial for chromosome condensation and cell-cycle progression during mitosis and meiosis. In addition phosphorylation at Ser-11 (H3S10ph) by RPS6KA4 and RPS6KA5 is important during interphase because it enables the transcription of genes following external stimulation, like mitogens, stress, growth factors or UV irradiation and result in the activation of genes, such as c-fos and c-jun. Phosphorylation at Ser-11 (H3S10ph), which is linked to gene activation, prevents methylation at Lys-10 (H3K9me) but facilitates acetylation of H3 and H4. Phosphorylation at Ser-11 (H3S10ph) by AURKB mediates the dissociation of HP1 proteins (CBX1, CBX3 and CBX5) from heterochromatin. Phosphorylation at Ser-11 (H3S10ph) is also an essential regulatory mechanism for neoplastic cell transformation. Phosphorylated at Ser-29 (H3S28ph) by MAP3K20 isoform 1, RPS6KA5 or AURKB during mitosis or upon ultraviolet B irradiation. Phosphorylation at Thr-7 (H3T6ph) by PRKCB is a specific tag for epigenetic transcriptional activation that prevents demethylation of Lys-5 (H3K4me) by LSD1/KDM1A. At centromeres, specifically phosphorylated at Thr-12 (H3T11ph) from prophase to early anaphase, by DAPK3 and PKN1. Phosphorylation at Thr-12 (H3T11ph) by PKN1 or isoform M2 of PKM (PKM2) is a specific tag for epigenetic transcriptional activation that promotes demethylation of Lys-10 (H3K9me) by KDM4C/JMJD2C. Phosphorylation at Tyr-42 (H3Y41ph) by JAK2 promotes exclusion of CBX5 (HP1 alpha) from chromatin. Post-translationally, lysine deamination at Lys-5 (H3K4all) to form allysine is mediated by LOXL2. Allysine formation by LOXL2 only takes place on H3K4me3 and results in gene repression. Butyrylation of histones marks active promoters and competes with histone acetylation. It is present during late spermatogenesis. In terms of processing, succinylation at Lys-80 (H3K79succ) by KAT2A takes place with a maximum frequency around the transcription start sites of genes. It gives a specific tag for epigenetic transcription activation. Post-translationally, serine ADP-ribosylation constitutes the primary form of ADP-ribosylation of proteins in response to DNA damage. Serine ADP-ribosylation at Ser-11 (H3S10ADPr) is mutually exclusive with phosphorylation at Ser-11 (H3S10ph) and impairs acetylation at Lys-10 (H3K9ac).

It localises to the nucleus. The protein localises to the chromosome. Core component of nucleosome. Nucleosomes wrap and compact DNA into chromatin, limiting DNA accessibility to the cellular machineries which require DNA as a template. Histones thereby play a central role in transcription regulation, DNA repair, DNA replication and chromosomal stability. DNA accessibility is regulated via a complex set of post-translational modifications of histones, also called histone code, and nucleosome remodeling. This chain is Histone H3.3C, found in Bos taurus (Bovine).